Reading from the N-terminus, the 183-residue chain is Probable adenylyl-sulfate kinase (183 aa).

Residue 17–24 (GLPGSGKT) coordinates ATP. Residue serine 91 is the Phosphoserine intermediate of the active site.

It belongs to the APS kinase family.

The catalysed reaction is adenosine 5'-phosphosulfate + ATP = 3'-phosphoadenylyl sulfate + ADP + H(+). The protein operates within sulfur metabolism; hydrogen sulfide biosynthesis; sulfite from sulfate: step 2/3. In terms of biological role, catalyzes the synthesis of activated sulfate. The protein is Probable adenylyl-sulfate kinase (cysC) of Aeropyrum pernix (strain ATCC 700893 / DSM 11879 / JCM 9820 / NBRC 100138 / K1).